The sequence spans 270 residues: Electron transfer flavoprotein subunit beta (270 aa).

The protein belongs to the ETF alpha-subunit/FixB family. In terms of assembly, heterodimer of an alpha and a beta subunit. Requires FAD as cofactor.

Functionally, the electron transfer flavoprotein serves as a specific electron acceptor for other dehydrogenases. It transfers the electrons to the main respiratory chain via ETF-ubiquinone oxidoreductase (ETF dehydrogenase). The sequence is that of Electron transfer flavoprotein subunit beta (etfB) from Megasphaera elsdenii.